The chain runs to 106 residues: Pyrimidine/purine nucleoside phosphorylase (106 aa).

This sequence belongs to the nucleoside phosphorylase PpnP family.

The catalysed reaction is a purine D-ribonucleoside + phosphate = a purine nucleobase + alpha-D-ribose 1-phosphate. It catalyses the reaction adenosine + phosphate = alpha-D-ribose 1-phosphate + adenine. The enzyme catalyses cytidine + phosphate = cytosine + alpha-D-ribose 1-phosphate. It carries out the reaction guanosine + phosphate = alpha-D-ribose 1-phosphate + guanine. The catalysed reaction is inosine + phosphate = alpha-D-ribose 1-phosphate + hypoxanthine. It catalyses the reaction thymidine + phosphate = 2-deoxy-alpha-D-ribose 1-phosphate + thymine. The enzyme catalyses uridine + phosphate = alpha-D-ribose 1-phosphate + uracil. It carries out the reaction xanthosine + phosphate = alpha-D-ribose 1-phosphate + xanthine. Functionally, catalyzes the phosphorolysis of diverse nucleosides, yielding D-ribose 1-phosphate and the respective free bases. Can use uridine, adenosine, guanosine, cytidine, thymidine, inosine and xanthosine as substrates. Also catalyzes the reverse reactions. The chain is Pyrimidine/purine nucleoside phosphorylase from Burkholderia cenocepacia (strain ATCC BAA-245 / DSM 16553 / LMG 16656 / NCTC 13227 / J2315 / CF5610) (Burkholderia cepacia (strain J2315)).